The chain runs to 362 residues: 3-dehydroquinate synthase (362 aa).

NAD(+) contacts are provided by residues 70-75 (DGESYK), 104-108 (GVVGD), 128-129 (TT), Lys-141, and Lys-150. Glu-183, His-246, and His-263 together coordinate Zn(2+).

It belongs to the sugar phosphate cyclases superfamily. Dehydroquinate synthase family. Co(2+) is required as a cofactor. Requires Zn(2+) as cofactor. The cofactor is NAD(+).

The protein resides in the cytoplasm. The catalysed reaction is 7-phospho-2-dehydro-3-deoxy-D-arabino-heptonate = 3-dehydroquinate + phosphate. It functions in the pathway metabolic intermediate biosynthesis; chorismate biosynthesis; chorismate from D-erythrose 4-phosphate and phosphoenolpyruvate: step 2/7. In terms of biological role, catalyzes the conversion of 3-deoxy-D-arabino-heptulosonate 7-phosphate (DAHP) to dehydroquinate (DHQ). This is 3-dehydroquinate synthase from Saccharophagus degradans (strain 2-40 / ATCC 43961 / DSM 17024).